Consider the following 156-residue polypeptide: MNINATILGQAIAFVLFVMFCMKFVWPPIMAAIEKRQKEIADGLSSAERAKKDLDLAQANATDQMKKAKVEAQVIIEQANKQKAQILDDAKAEAEQERNRIVTQAQAEIDAERKRAREELRKQVAMLAIAGAEKIIERSVDEAANSDIVDKLVAEL.

The helical transmembrane segment at 11-31 threads the bilayer; it reads AIAFVLFVMFCMKFVWPPIMA.

It belongs to the ATPase B chain family. As to quaternary structure, F-type ATPases have 2 components, F(1) - the catalytic core - and F(0) - the membrane proton channel. F(1) has five subunits: alpha(3), beta(3), gamma(1), delta(1), epsilon(1). F(0) has three main subunits: a(1), b(2) and c(10-14). The alpha and beta chains form an alternating ring which encloses part of the gamma chain. F(1) is attached to F(0) by a central stalk formed by the gamma and epsilon chains, while a peripheral stalk is formed by the delta and b chains.

The protein resides in the cell inner membrane. F(1)F(0) ATP synthase produces ATP from ADP in the presence of a proton or sodium gradient. F-type ATPases consist of two structural domains, F(1) containing the extramembraneous catalytic core and F(0) containing the membrane proton channel, linked together by a central stalk and a peripheral stalk. During catalysis, ATP synthesis in the catalytic domain of F(1) is coupled via a rotary mechanism of the central stalk subunits to proton translocation. Its function is as follows. Component of the F(0) channel, it forms part of the peripheral stalk, linking F(1) to F(0). This Photorhabdus laumondii subsp. laumondii (strain DSM 15139 / CIP 105565 / TT01) (Photorhabdus luminescens subsp. laumondii) protein is ATP synthase subunit b.